A 190-amino-acid polypeptide reads, in one-letter code: Interferon alpha-9 (190 aa).

A signal peptide spans 1 to 23; the sequence is MARPFAFLMVLVVISYWSTCSLG. 2 cysteine pairs are disulfide-bonded: C24-C122 and C52-C162. A glycan (N-linked (GlcNAc...) asparagine) is linked at N101.

The protein belongs to the alpha/beta interferon family.

The protein resides in the secreted. Produced by macrophages, IFN-alpha have antiviral activities. Interferon stimulates the production of two enzymes: a protein kinase and an oligoadenylate synthetase. The polypeptide is Interferon alpha-9 (Ifna9) (Mus musculus (Mouse)).